The chain runs to 885 residues: Lon protease homolog 2, peroxisomal (885 aa).

Residues 12 to 256 (LAVLPFRNKV…KATELVDRHL (245 aa)) form the Lon N-terminal domain. Residues 70–104 (LLSPGVGSDSGEGGSKVGGSAVESSKQDTKNGKEP) form a disordered region. Positions 77–86 (SDSGEGGSKV) are enriched in gly residues. Positions 94–104 (SKQDTKNGKEP) are enriched in basic and acidic residues. ATP is bound at residue 409-416 (GPPGVGKT). A Lon proteolytic domain is found at 690-875 (VASPGVSVGL…EEVLDHAFEG (186 aa)). Active-site residues include Ser-781 and Lys-824. Residues 883–885 (SKL) carry the Microbody targeting signal motif.

It belongs to the peptidase S16 family.

The protein localises to the peroxisome matrix. It carries out the reaction Hydrolysis of proteins in presence of ATP.. ATP-dependent serine protease that mediates the selective degradation of misfolded and unassembled polypeptides in the peroxisomal matrix. Necessary for type 2 peroxisome targeting signal (PTS2)-containing protein processing and facilitates peroxisome matrix protein import. The sequence is that of Lon protease homolog 2, peroxisomal (LON1) from Zea mays (Maize).